A 234-amino-acid chain; its full sequence is Putative B3 domain-containing protein At2g18810 (234 aa).

Residues 55 to 88 (CKNQDPEQNPNRVASSPSLCHVKSKRPQKGVSNK) form a disordered region. Positions 60-72 (PEQNPNRVASSPS) are enriched in polar residues. The TF-B3 DNA-binding region spans 87–185 (NKPILDMDFL…MLFFALVLSD (99 aa)).

Its subcellular location is the nucleus. In Arabidopsis thaliana (Mouse-ear cress), this protein is Putative B3 domain-containing protein At2g18810.